We begin with the raw amino-acid sequence, 357 residues long: Histidine biosynthesis bifunctional protein HisB (357 aa).

The segment at 1-168 (MSEKVLFIDR…IVFKLTKKHD (168 aa)) is histidinol-phosphatase. Asp9 (nucleophile) is an active-site residue. Positions 9 and 11 each coordinate Mg(2+). Asp11 (proton donor) is an active-site residue. 4 residues coordinate Zn(2+): Cys93, His95, Cys101, and Cys103. Asp130 is a Mg(2+) binding site. The interval 169–357 (RHAKVVRNTK…KNLPSSKGLL (189 aa)) is imidazoleglycerol-phosphate dehydratase.

In the N-terminal section; belongs to the histidinol-phosphatase family. It in the C-terminal section; belongs to the imidazoleglycerol-phosphate dehydratase family. It depends on Mg(2+) as a cofactor. Zn(2+) is required as a cofactor.

It localises to the cytoplasm. It catalyses the reaction D-erythro-1-(imidazol-4-yl)glycerol 3-phosphate = 3-(imidazol-4-yl)-2-oxopropyl phosphate + H2O. It carries out the reaction L-histidinol phosphate + H2O = L-histidinol + phosphate. It participates in amino-acid biosynthesis; L-histidine biosynthesis; L-histidine from 5-phospho-alpha-D-ribose 1-diphosphate: step 6/9. It functions in the pathway amino-acid biosynthesis; L-histidine biosynthesis; L-histidine from 5-phospho-alpha-D-ribose 1-diphosphate: step 8/9. The polypeptide is Histidine biosynthesis bifunctional protein HisB (Buchnera aphidicola subsp. Baizongia pistaciae (strain Bp)).